A 1396-amino-acid chain; its full sequence is Integrin alpha-PS2 (1396 aa).

The first 31 residues, 1–31 (MSGDSIHRRRMALHCPITSLILLLIAMSAHG), serve as a signal peptide directing secretion. Over 32 to 1341 (YNIDLPSYVR…EPEPLQVPDV (1310 aa)) the chain is Extracellular. 7 FG-GAP repeats span residues 36–106 (LPSY…DCKL), 117–174 (NVDK…FTSH), 186–239 (RTNN…FPFK), 266–317 (STSE…RWNM), 318–383 (ANIF…TEEK), 386–445 (TTEH…GPLA), and 452–514 (KSEQ…FASN). N-linked (GlcNAc...) asparagine glycosylation occurs at Asn69. The N-linked (GlcNAc...) asparagine glycan is linked to Asn209. N-linked (GlcNAc...) asparagine glycosylation occurs at Asn322. N-linked (GlcNAc...) asparagine glycans are attached at residues Asn584, Asn598, Asn741, Asn783, Asn833, and Asn959. Disordered stretches follow at residues 960-1107 (STDA…LGTL) and 1159-1246 (PGFQ…KPLQ). A compositionally biased stretch (basic and acidic residues) spans 963–979 (AGDKLSPKQVEQRRQED). The segment covering 997–1006 (QAVQEPQVNQ) has biased composition (polar residues). Asn1005 carries an N-linked (GlcNAc...) asparagine glycan. 2 stretches are compositionally biased toward low complexity: residues 1007-1021 (TSFT…SSGS) and 1060-1071 (QQQQQHQQLLLA). The span at 1082–1099 (VTFNDKSQFGGRNNNFHT) shows a compositional bias: polar residues. 2 stretches are compositionally biased toward low complexity: residues 1162–1182 (QGQT…GYQT) and 1217–1226 (SSSSSSSSSS). Residues Asn1299 and Asn1307 are each glycosylated (N-linked (GlcNAc...) asparagine). Residues 1342–1366 (VPLWVVVLAACAGALIFLLLVWLLY) form a helical membrane-spanning segment. The Cytoplasmic segment spans residues 1367–1396 (KCGFFNRNRPTDHSQERQPLRNGYHGDEHL). The disordered stretch occupies residues 1377-1396 (TDHSQERQPLRNGYHGDEHL).

The protein belongs to the integrin alpha chain family. In terms of assembly, heterodimer of an alpha and a beta subunit. The alpha subunit is composed of a heavy and a light chain linked by a disulfide bond. Alpha-PS2 associates with beta-PS. The heavy-light chain cleavage site is either in 1230-1231, or 1233-1234, or 1243-1244. In ovaries, highly expressed in follicle cells. At syncytial blastoderm stage, expressed in the embryonic mesodermal precursors but not in the ectoderm. At embryonic stages 7 and 10, expression is restricted to the mesoderm. At stage 12, expressed in the gonadal sheath and the interstitial cells of the gonad. In stage 16 embryos, expressed in the somatic and visceral muscles where localizes to sites of attachment between adjacent muscles. In third larval instar wing imaginal disk, expressed in the ventral compartment and in a subset of adepithelial and peripodial cells (at protein level).

The protein localises to the apical cell membrane. It is found in the lateral cell membrane. It localises to the basal cell membrane. Functionally, alpha-PS2/beta-PS is a receptor for Tig, wb and Ten-m. Involved in the function and/or development of the olfactory system. In Drosophila melanogaster (Fruit fly), this protein is Integrin alpha-PS2 (if).